Reading from the N-terminus, the 123-residue chain is Basic myotoxic phospholipase A2 PhTX-II (123 aa).

Intrachain disulfides connect cysteine 26–cysteine 116, cysteine 28–cysteine 45, cysteine 44–cysteine 95, cysteine 50–cysteine 123, cysteine 51–cysteine 88, cysteine 58–cysteine 81, and cysteine 75–cysteine 86. Ca(2+) contacts are provided by tyrosine 27, glycine 29, and glycine 31. Histidine 48 is an active-site residue. Aspartate 49 lines the Ca(2+) pocket. Aspartate 89 is a catalytic residue.

In terms of assembly, monomer. The cofactor is Ca(2+). In terms of tissue distribution, expressed by the venom gland.

The protein resides in the secreted. It carries out the reaction a 1,2-diacyl-sn-glycero-3-phosphocholine + H2O = a 1-acyl-sn-glycero-3-phosphocholine + a fatty acid + H(+). Its activity is regulated as follows. P-bromophenacyl bromide (BPB) completely inhibits the catalytic and edematogenic activities. Enzymatic activity is also diminished by EDTA, heparin and crotapotins F2 and F3 from C.d.collilineatus. Inhibited by divalent cations different from calcium ions (cadmium, magnesium, manganese, zinc), since they act as competitive antagonists of this cofactor. Functionally, snake venom phospholipase A2 (PLA2) that induces myotoxicity and local edema in mice. In addition, it causes neuromuscular blockade in avian neuromuscular preparations with a significant direct action on skeletal muscle function. Myotoxic action is exerted by both enzymatic and non-enzymatic mechanisms. PLA2 catalyzes the calcium-dependent hydrolysis of the 2-acyl groups in 3-sn-phosphoglycerides. This chain is Basic myotoxic phospholipase A2 PhTX-II, found in Bothrocophias hyoprora (Amazonian hognose viper).